Reading from the N-terminus, the 61-residue chain is Cytotoxin 3 (61 aa).

4 cysteine pairs are disulfide-bonded: Cys3–Cys22, Cys15–Cys39, Cys43–Cys54, and Cys55–Cys60.

The protein belongs to the three-finger toxin family. Short-chain subfamily. Type IB cytotoxin sub-subfamily. As to expression, expressed by the venom gland.

It is found in the secreted. This protein lyses red blood cells and has cardiotoxic and hypotensive activities. The protein is Cytotoxin 3 of Hemachatus haemachatus (Rinkhals).